We begin with the raw amino-acid sequence, 475 residues long: V-type ATP synthase beta chain (475 aa).

It belongs to the ATPase alpha/beta chains family.

Functionally, produces ATP from ADP in the presence of a proton gradient across the membrane. The V-type beta chain is a regulatory subunit. The polypeptide is V-type ATP synthase beta chain (Anaeromyxobacter dehalogenans (strain 2CP-C)).